The following is a 302-amino-acid chain: Sulfate adenylyltransferase subunit 2 (302 aa).

This sequence belongs to the PAPS reductase family. CysD subfamily. Heterodimer composed of CysD, the smaller subunit, and CysN.

It carries out the reaction sulfate + ATP + H(+) = adenosine 5'-phosphosulfate + diphosphate. Its pathway is sulfur metabolism; hydrogen sulfide biosynthesis; sulfite from sulfate: step 1/3. With CysN forms the ATP sulfurylase (ATPS) that catalyzes the adenylation of sulfate producing adenosine 5'-phosphosulfate (APS) and diphosphate, the first enzymatic step in sulfur assimilation pathway. APS synthesis involves the formation of a high-energy phosphoric-sulfuric acid anhydride bond driven by GTP hydrolysis by CysN coupled to ATP hydrolysis by CysD. In Yersinia enterocolitica serotype O:8 / biotype 1B (strain NCTC 13174 / 8081), this protein is Sulfate adenylyltransferase subunit 2.